The chain runs to 420 residues: Proteasome-activating nucleotidase (420 aa).

The tract at residues 1–25 (MRSHLVKPGSVYDGIEPGELGETTE) is disordered. Residues 22-79 (ETTESVQDRVRQLESRNSFLEEQCSQIESEKRYLENQKIKYEREIRKLQSELDRMKTS) adopt a coiled-coil conformation. ATP contacts are provided by residues 203–208 (GTGKTL) and His-342. A docks into pockets in the proteasome alpha-ring to cause gate opening region spans residues 418–420 (MFV).

This sequence belongs to the AAA ATPase family. In terms of assembly, homohexamer. The hexameric complex has a two-ring architecture resembling a top hat that caps the 20S proteasome core at one or both ends. Upon ATP-binding, the C-terminus of PAN interacts with the alpha-rings of the proteasome core by binding to the intersubunit pockets.

It is found in the cytoplasm. In terms of biological role, ATPase which is responsible for recognizing, binding, unfolding and translocation of substrate proteins into the archaeal 20S proteasome core particle. Is essential for opening the gate of the 20S proteasome via an interaction with its C-terminus, thereby allowing substrate entry and access to the site of proteolysis. Thus, the C-termini of the proteasomal ATPase function like a 'key in a lock' to induce gate opening and therefore regulate proteolysis. Unfolding activity requires energy from ATP hydrolysis, whereas ATP binding alone promotes ATPase-20S proteasome association which triggers gate opening, and supports translocation of unfolded substrates. This is Proteasome-activating nucleotidase from Methanosarcina mazei (strain ATCC BAA-159 / DSM 3647 / Goe1 / Go1 / JCM 11833 / OCM 88) (Methanosarcina frisia).